The following is a 398-amino-acid chain: tRNA pseudouridine synthase D (398 aa).

Catalysis depends on aspartate 76, which acts as the Nucleophile. The TRUD domain maps to 151 to 360 (GVPNFFGEQR…MPGERRPLRI (210 aa)).

This sequence belongs to the pseudouridine synthase TruD family.

The catalysed reaction is uridine(13) in tRNA = pseudouridine(13) in tRNA. In terms of biological role, responsible for synthesis of pseudouridine from uracil-13 in transfer RNAs. This is tRNA pseudouridine synthase D from Syntrophotalea carbinolica (strain DSM 2380 / NBRC 103641 / GraBd1) (Pelobacter carbinolicus).